Reading from the N-terminus, the 216-residue chain is Protein Syd (216 aa).

It belongs to the Syd family.

The protein resides in the cell inner membrane. Functionally, interacts with the SecY protein in vivo. May bind preferentially to an uncomplexed state of SecY, thus functioning either as a chelating agent for excess SecY in the cell or as a regulatory factor that negatively controls the translocase function. This Shewanella putrefaciens (strain CN-32 / ATCC BAA-453) protein is Protein Syd.